The sequence spans 445 residues: Xylose isomerase (445 aa).

Residues His-107 and Asp-110 contribute to the active site. Glu-238, Glu-274, His-277, Asp-302, Asp-313, Asp-315, and Asp-345 together coordinate Mg(2+).

Belongs to the xylose isomerase family. In terms of assembly, homotetramer. Mg(2+) serves as cofactor.

It is found in the cytoplasm. The catalysed reaction is alpha-D-xylose = alpha-D-xylulofuranose. This Bacillus velezensis (strain DSM 23117 / BGSC 10A6 / LMG 26770 / FZB42) (Bacillus amyloliquefaciens subsp. plantarum) protein is Xylose isomerase.